A 519-amino-acid chain; its full sequence is Cytochrome P450 monooxygenase easM (519 aa).

A helical transmembrane segment spans residues 16–33 (VAPALFASSISVLFLILS). 2 N-linked (GlcNAc...) asparagine glycosylation sites follow: Asn-50 and Asn-353. Position 458 (Cys-458) interacts with heme.

It belongs to the cytochrome P450 family. Heme is required as a cofactor.

It is found in the membrane. Its pathway is alkaloid biosynthesis; ergot alkaloid biosynthesis. Its function is as follows. Cytochrome P450 monooxygenase; part of the gene cluster that mediates the biosynthesis of fumiclavanine C, a fungal ergot alkaloid. DmaW catalyzes the first step of ergot alkaloid biosynthesis by condensing dimethylallyl diphosphate (DMAP) and tryptophan to form 4-dimethylallyl-L-tryptophan. The second step is catalyzed by the methyltransferase easF that methylates 4-dimethylallyl-L-tryptophan in the presence of S-adenosyl-L-methionine, resulting in the formation of 4-dimethylallyl-L-abrine. The catalase easC and the FAD-dependent oxidoreductase easE then transform 4-dimethylallyl-L-abrine to chanoclavine-I which is further oxidized by EasD in the presence of NAD(+), resulting in the formation of chanoclavine-I aldehyde. EasA reduces chanoclavine-I aldehyde to dihydrochanoclavine-I aldehyde that spontaneously dehydrates to form 6,8-dimethyl-6,7-didehydroergoline. EasG then catalyzes the reduction of 6,8-dimethyl-6,7-didehydroergoline to form festuclavine. Hydrolysis of festuclavine by easM then leads to the formation of fumigaclavine B which is in turn acetylated by easN to fumigaclavine A. Finally, easL catalyzes the conversion of fumigaclavine A into fumigaclavine C by attaching a dimethylallyl moiety to C-2 of the indole nucleus. This is Cytochrome P450 monooxygenase easM from Aspergillus fumigatus (strain ATCC MYA-4609 / CBS 101355 / FGSC A1100 / Af293) (Neosartorya fumigata).